The primary structure comprises 313 residues: Tagatose-6-phosphate kinase (313 aa).

Belongs to the carbohydrate kinase PfkB family. LacC subfamily.

The catalysed reaction is D-tagatofuranose 6-phosphate + ATP = D-tagatofuranose 1,6-bisphosphate + ADP + H(+). It functions in the pathway carbohydrate metabolism; D-tagatose 6-phosphate degradation; D-glyceraldehyde 3-phosphate and glycerone phosphate from D-tagatose 6-phosphate: step 1/2. This Enterococcus faecalis (strain ATCC 700802 / V583) protein is Tagatose-6-phosphate kinase.